We begin with the raw amino-acid sequence, 101 residues long: Fructose-bisphosphate aldolase (101 aa).

Residue K11 is the Schiff-base intermediate with dihydroxyacetone-P of the active site.

The protein belongs to the class I fructose-bisphosphate aldolase family.

It catalyses the reaction beta-D-fructose 1,6-bisphosphate = D-glyceraldehyde 3-phosphate + dihydroxyacetone phosphate. The protein operates within carbohydrate degradation; glycolysis; D-glyceraldehyde 3-phosphate and glycerone phosphate from D-glucose: step 4/4. This is Fructose-bisphosphate aldolase from Lymnaea stagnalis (Great pond snail).